Reading from the N-terminus, the 27-residue chain is Allergen C-C (27 aa).

Belongs to the protease inhibitor I6 (cereal trypsin/alpha-amylase inhibitor) family.

It is found in the secreted. This chain is Allergen C-C, found in Triticum aestivum (Wheat).